The chain runs to 143 residues: Transcriptional regulator MraZ (143 aa).

SpoVT-AbrB domains are found at residues 5 to 47 (EYEH…TLEE) and 76 to 119 (AVEV…DRAS).

The protein belongs to the MraZ family. Forms oligomers.

Its subcellular location is the cytoplasm. It localises to the nucleoid. The polypeptide is Transcriptional regulator MraZ (Staphylococcus carnosus (strain TM300)).